Here is a 68-residue protein sequence, read N- to C-terminus: Small ribosomal subunit protein bS21 (68 aa).

Positions 39–68 (PPSVKRVRKKQESERRHRKERAMRRRMMEE) are disordered. Residues 54–68 (RHRKERAMRRRMMEE) show a composition bias toward basic residues.

The protein belongs to the bacterial ribosomal protein bS21 family.

This is Small ribosomal subunit protein bS21 from Orientia tsutsugamushi (strain Ikeda) (Rickettsia tsutsugamushi).